The chain runs to 1116 residues: cGMP-specific 3',5'-cyclic phosphodiesterase (1116 aa).

2 disordered regions span residues 1-36 and 82-136; these read MTDVSATTGRAGDRVSSTSSEVAVETTSQALTNGAA and KSEC…ATQQ. Over residues 15-28 the composition is skewed to low complexity; that stretch reads VSSTSSEVAVETTS. Residues 86–136 are compositionally biased toward polar residues; sequence HSQSNNNQHVETAPSKQSSDSEASAPTTVSIPSANAKINSSSSGKTTATQQ. 2 consecutive GAF domains span residues 241–393 and 425–611; these read DIDV…GIGI and NLEC…GLGI. One can recognise a PDEase domain in the interval 641-964; it reads SQDQTEKLAQ…RNWQDLAEKV (324 aa). Histidine 717 acts as the Proton donor in catalysis. Histidine 721, histidine 757, aspartate 758, and aspartate 868 together coordinate a divalent metal cation. 2 disordered regions span residues 1005 to 1031 and 1067 to 1116; these read QHGGSAGGGEDTHTPEHQRSSSRLSIK and HVSE…CALL. 2 stretches are compositionally biased toward basic and acidic residues: residues 1014–1023 and 1067–1076; these read EDTHTPEHQR and HVSEDMDDKS. Residues 1085 to 1103 show a composition bias toward low complexity; that stretch reads SGSVGRMSASSSTSSAGTV. Residues 1106–1116 show a composition bias toward basic residues; it reads SKKRSKLCALL. Position 1113 is a cysteine methyl ester (cysteine 1113). Cysteine 1113 carries S-farnesyl cysteine lipidation. A propeptide spans 1114–1116 (removed in mature form); it reads ALL.

The protein belongs to the cyclic nucleotide phosphodiesterase family. In terms of assembly, interacts with PrBP. It depends on a divalent metal cation as a cofactor.

Its subcellular location is the cell membrane. The catalysed reaction is 3',5'-cyclic GMP + H2O = GMP + H(+). Its function is as follows. Has a role regulating cGMP transport in Malpighian tubule principal cells. This chain is cGMP-specific 3',5'-cyclic phosphodiesterase, found in Drosophila mojavensis (Fruit fly).